Here is a 236-residue protein sequence, read N- to C-terminus: Leucyl/phenylalanyl-tRNA--protein transferase (236 aa).

It belongs to the L/F-transferase family.

Its subcellular location is the cytoplasm. The catalysed reaction is N-terminal L-lysyl-[protein] + L-leucyl-tRNA(Leu) = N-terminal L-leucyl-L-lysyl-[protein] + tRNA(Leu) + H(+). It carries out the reaction N-terminal L-arginyl-[protein] + L-leucyl-tRNA(Leu) = N-terminal L-leucyl-L-arginyl-[protein] + tRNA(Leu) + H(+). The enzyme catalyses L-phenylalanyl-tRNA(Phe) + an N-terminal L-alpha-aminoacyl-[protein] = an N-terminal L-phenylalanyl-L-alpha-aminoacyl-[protein] + tRNA(Phe). Functions in the N-end rule pathway of protein degradation where it conjugates Leu, Phe and, less efficiently, Met from aminoacyl-tRNAs to the N-termini of proteins containing an N-terminal arginine or lysine. In Yersinia enterocolitica serotype O:8 / biotype 1B (strain NCTC 13174 / 8081), this protein is Leucyl/phenylalanyl-tRNA--protein transferase.